The chain runs to 353 residues: 26S proteasome non-ATPase regulatory subunit 8 (353 aa).

A disordered region spans residues M1–L25. Residues P165–P334 enclose the PCI domain. A Glycyl lysine isopeptide (Lys-Gly) (interchain with G-Cter in SUMO2) cross-link involves residue K300.

It belongs to the proteasome subunit S14 family. In terms of assembly, component of the 19S proteasome regulatory particle complex. The 26S proteasome consists of a 20S core particle (CP) and two 19S regulatory subunits (RP). The regulatory particle is made of a lid composed of 9 subunits including PSMD8, a base containing 6 ATPases and few additional components. Interacts with DDI2. Interacts with TASOR. As to expression, expressed in the Sertoli cells of the testis.

In terms of biological role, component of the 26S proteasome, a multiprotein complex involved in the ATP-dependent degradation of ubiquitinated proteins. This complex plays a key role in the maintenance of protein homeostasis by removing misfolded or damaged proteins, which could impair cellular functions, and by removing proteins whose functions are no longer required. Therefore, the proteasome participates in numerous cellular processes, including cell cycle progression, apoptosis, or DNA damage repair. The chain is 26S proteasome non-ATPase regulatory subunit 8 (Psmd8) from Mus musculus (Mouse).